The primary structure comprises 134 residues: Methylglyoxal synthase (134 aa).

The region spanning 1 to 134 is the MGS-like domain; that stretch reads MVNLNIALIA…GLLEWRNAVK (134 aa). Substrate contacts are provided by residues His11, Lys15, and 37-40; that span reads TGAT. Catalysis depends on Asp63, which acts as the Proton donor/acceptor. His90 provides a ligand contact to substrate.

The protein belongs to the methylglyoxal synthase family.

The enzyme catalyses dihydroxyacetone phosphate = methylglyoxal + phosphate. In terms of biological role, catalyzes the formation of methylglyoxal from dihydroxyacetone phosphate. This chain is Methylglyoxal synthase, found in Thermoanaerobacterium thermosaccharolyticum (Clostridium thermosaccharolyticum).